We begin with the raw amino-acid sequence, 665 residues long: DNA ligase (665 aa).

NAD(+) contacts are provided by residues 32-36 (DSEYD), 81-82 (SL), and glutamate 110. The N6-AMP-lysine intermediate role is filled by lysine 112. NAD(+)-binding residues include arginine 133, glutamate 167, lysine 283, and lysine 307. 4 residues coordinate Zn(2+): cysteine 401, cysteine 404, cysteine 419, and cysteine 424. In terms of domain architecture, BRCT spans 586–665 (EGHPDFSGKT…AAFIEKQNGI (80 aa)).

Belongs to the NAD-dependent DNA ligase family. LigA subfamily. Mg(2+) is required as a cofactor. It depends on Mn(2+) as a cofactor.

The enzyme catalyses NAD(+) + (deoxyribonucleotide)n-3'-hydroxyl + 5'-phospho-(deoxyribonucleotide)m = (deoxyribonucleotide)n+m + AMP + beta-nicotinamide D-nucleotide.. Functionally, DNA ligase that catalyzes the formation of phosphodiester linkages between 5'-phosphoryl and 3'-hydroxyl groups in double-stranded DNA using NAD as a coenzyme and as the energy source for the reaction. It is essential for DNA replication and repair of damaged DNA. The sequence is that of DNA ligase from Staphylococcus epidermidis (strain ATCC 12228 / FDA PCI 1200).